The chain runs to 112 residues: MALKYVSSYLLAVAAGNENPSVDDLKKILDAVGSDVDEECLQGLVDSMSGKTVHETIAAGMTKLQSMPAGGAAMPAAAAGGAPAAAEDKAEAKKPEAEPEEEEDDMGFSLFD.

The span at alanine 69–alanine 85 shows a compositional bias: low complexity. Residues alanine 69–aspartate 112 are disordered. Residues alanine 86–alanine 97 are compositionally biased toward basic and acidic residues.

This sequence belongs to the eukaryotic ribosomal protein P1/P2 family. In terms of assembly, P1 and P2 exist as dimers at the large ribosomal subunit. Post-translationally, phosphorylated.

Its function is as follows. Plays an important role in the elongation step of protein synthesis. This is Large ribosomal subunit protein P2 from Babesia bovis.